The following is a 231-amino-acid chain: uncharacterized protein (231 aa).

A run of 4 helical transmembrane segments spans residues 39–59, 70–90, 156–176, and 189–206; these read FCIS…YGPF, ALSL…VPVI, AIIS…GGSI, and IVAI…NMFF.

This sequence belongs to the FliR/MopE/SpaR family.

It is found in the cell membrane. This is an uncharacterized protein from Escherichia coli (strain K12).